Reading from the N-terminus, the 335-residue chain is Dihydroorotate dehydrogenase (quinone) (335 aa).

Residues 59 to 63 and threonine 83 each bind FMN; that span reads AGLDK. Position 63 (lysine 63) interacts with substrate. 108–112 contacts substrate; sequence NRMGF. 2 residues coordinate FMN: asparagine 136 and asparagine 169. Asparagine 169 provides a ligand contact to substrate. Serine 172 functions as the Nucleophile in the catalytic mechanism. Asparagine 174 contributes to the substrate binding site. Residues lysine 214 and threonine 242 each contribute to the FMN site. 243–244 serves as a coordination point for substrate; sequence NT. Residues glycine 265, glycine 294, and 315-316 contribute to the FMN site; that span reads YS.

This sequence belongs to the dihydroorotate dehydrogenase family. Type 2 subfamily. As to quaternary structure, monomer. It depends on FMN as a cofactor.

It localises to the cell membrane. It carries out the reaction (S)-dihydroorotate + a quinone = orotate + a quinol. It functions in the pathway pyrimidine metabolism; UMP biosynthesis via de novo pathway; orotate from (S)-dihydroorotate (quinone route): step 1/1. Functionally, catalyzes the conversion of dihydroorotate to orotate with quinone as electron acceptor. The polypeptide is Dihydroorotate dehydrogenase (quinone) (Neisseria meningitidis serogroup B (strain ATCC BAA-335 / MC58)).